Reading from the N-terminus, the 51-residue chain is Cytochrome b559 subunit beta (51 aa).

A helical membrane pass occupies residues 26–42 (WLAVHALAVPTVFFIGS). Histidine 30 is a binding site for heme.

It belongs to the PsbE/PsbF family. Heterodimer of an alpha subunit and a beta subunit. PSII is composed of 1 copy each of membrane proteins PsbA, PsbB, PsbC, PsbD, PsbE, PsbF, PsbH, PsbI, PsbJ, PsbK, PsbL, PsbM, PsbT, PsbY, PsbZ, Psb30/Ycf12, at least 3 peripheral proteins of the oxygen-evolving complex and a large number of cofactors. It forms dimeric complexes. It depends on heme b as a cofactor.

The protein resides in the plastid. It localises to the chloroplast thylakoid membrane. In terms of biological role, this b-type cytochrome is tightly associated with the reaction center of photosystem II (PSII). PSII is a light-driven water:plastoquinone oxidoreductase that uses light energy to abstract electrons from H(2)O, generating O(2) and a proton gradient subsequently used for ATP formation. It consists of a core antenna complex that captures photons, and an electron transfer chain that converts photonic excitation into a charge separation. This chain is Cytochrome b559 subunit beta, found in Bigelowiella natans (Pedinomonas minutissima).